The sequence spans 556 residues: 2-isopropylmalate synthase (556 aa).

The 275-residue stretch at 33-307 (PIWCSSDLRD…NPGLDFSDID (275 aa)) folds into the Pyruvate carboxyltransferase domain. Positions 42, 246, 248, and 282 each coordinate Mg(2+). The interval 439 to 556 (ANVPYALISH…SLSQTQAKAA (118 aa)) is regulatory domain.

This sequence belongs to the alpha-IPM synthase/homocitrate synthase family. LeuA type 2 subfamily. Homodimer. Mg(2+) serves as cofactor.

The protein resides in the cytoplasm. The catalysed reaction is 3-methyl-2-oxobutanoate + acetyl-CoA + H2O = (2S)-2-isopropylmalate + CoA + H(+). It participates in amino-acid biosynthesis; L-leucine biosynthesis; L-leucine from 3-methyl-2-oxobutanoate: step 1/4. Catalyzes the condensation of the acetyl group of acetyl-CoA with 3-methyl-2-oxobutanoate (2-ketoisovalerate) to form 3-carboxy-3-hydroxy-4-methylpentanoate (2-isopropylmalate). The sequence is that of 2-isopropylmalate synthase from Pseudomonas syringae pv. syringae (strain B728a).